The primary structure comprises 351 residues: DNA polymerase IV (351 aa).

Positions 4–185 constitute a UmuC domain; it reads IIHVDMDCFY…LPLGKIPGVG (182 aa). Mg(2+)-binding residues include Asp8 and Asp103. The active site involves Glu104.

Belongs to the DNA polymerase type-Y family. Monomer. Mg(2+) serves as cofactor.

It localises to the cytoplasm. The enzyme catalyses DNA(n) + a 2'-deoxyribonucleoside 5'-triphosphate = DNA(n+1) + diphosphate. In terms of biological role, poorly processive, error-prone DNA polymerase involved in untargeted mutagenesis. Copies undamaged DNA at stalled replication forks, which arise in vivo from mismatched or misaligned primer ends. These misaligned primers can be extended by PolIV. Exhibits no 3'-5' exonuclease (proofreading) activity. May be involved in translesional synthesis, in conjunction with the beta clamp from PolIII. In Citrobacter koseri (strain ATCC BAA-895 / CDC 4225-83 / SGSC4696), this protein is DNA polymerase IV.